A 259-amino-acid chain; its full sequence is uncharacterized protein (259 aa).

3 helical membrane passes run 55–75, 85–105, and 127–147; these read ILIL…SYLI, FPSI…FFSS, and FFFA…LCCG.

The protein localises to the membrane. This is an uncharacterized protein from Arabidopsis thaliana (Mouse-ear cress).